Reading from the N-terminus, the 593-residue chain is DNA topoisomerase I, mitochondrial (593 aa).

A mitochondrion-targeting transit peptide spans 1–43 (MLLLWLRALCRRFQHVPRRVPSRQVSRGSKASRAGWGETSKSS). Interaction with DNA stretches follow at residues 254 to 255 (KY), 317 to 322 (RTGNEK), and 414 to 416 (TAK). In terms of domain architecture, Topo IB-type catalytic spans 261–593 (SSKPKGEMDW…FNQAGEDFEF (333 aa)). The active-site O-(3'-phospho-DNA)-tyrosine intermediate is the Tyr-551.

Belongs to the type IB topoisomerase family. The cofactor is Ca(2+). Mg(2+) serves as cofactor.

It localises to the mitochondrion. The catalysed reaction is ATP-independent breakage of single-stranded DNA, followed by passage and rejoining.. Functionally, releases the supercoiling and torsional tension of DNA introduced during duplication of mitochondrial DNA by transiently cleaving and rejoining one strand of the DNA duplex. Introduces a single-strand break via transesterification at a target site in duplex DNA. The scissile phosphodiester is attacked by the catalytic tyrosine of the enzyme, resulting in the formation of a DNA-(3'-phosphotyrosyl)-enzyme intermediate and the expulsion of a 5'-OH DNA strand. The free DNA strand then rotates around the intact phosphodiester bond on the opposing strand, thus removing DNA supercoils. Finally, in the religation step, the DNA 5'-OH attacks the covalent intermediate to expel the active-site tyrosine and restore the DNA phosphodiester backbone. The chain is DNA topoisomerase I, mitochondrial (Top1mt) from Rattus norvegicus (Rat).